The primary structure comprises 353 residues: MQFEVLKRFFPKESLKNCKGALWVHTASIGEFNTFLPILKELKREHRILLTYFSPRAREYLKTKSDFYDCLHPLPLDNPFSVKRFEELSKPKALIVVEREFWPSLIIFTKVPKILVNAYAKGSLIEKILSKKFDLIIMRTQEDVEKFKTFGAKRVFSCGNLKFICQKGKGIKLKGEFIVAGSIHTGEVEIILKAFKEIKKTYSSLKLILVPRHIENAKIFEKKARDFGFKTSFFENLEGDVILVDRFGILKELYPVGKIAIVGGTFVNIGGHNLLEPTCWGIPVIYGPYTHKVNDLKEFLEKEGAGFEVKNETELVTKLTELLSVKKEIKVEEKSREIKGCYLEKLREFLRGL.

The active-site Proton acceptor is the glutamate 31. CMP contacts are provided by residues 211–212 (PR), 247–249 (FGI), and 273–276 (NLLE).

This sequence belongs to the glycosyltransferase group 1 family. Glycosyltransferase 30 subfamily. In terms of assembly, can form homodimer, homotrimer and homotetramer.

It localises to the cell inner membrane. The catalysed reaction is lipid IVA (E. coli) + CMP-3-deoxy-beta-D-manno-octulosonate = alpha-Kdo-(2-&gt;6)-lipid IVA (E. coli) + CMP + H(+). The protein operates within bacterial outer membrane biogenesis; LPS core biosynthesis. Its function is as follows. Involved in lipopolysaccharide (LPS) biosynthesis. Catalyzes the transfer of a single 3-deoxy-D-manno-octulosonate (Kdo) residue from CMP-Kdo to lipid IV(A), the tetraacyldisaccharide-1,4'-bisphosphate precursor of lipid A. Is strictly monofunctional, i.e. is capable of adding only a single Kdo residue to the acceptor lipid. This chain is 3-deoxy-D-manno-octulosonic acid transferase (kdtA), found in Aquifex aeolicus (strain VF5).